We begin with the raw amino-acid sequence, 94 residues long: Integration host factor subunit beta (94 aa).

The protein belongs to the bacterial histone-like protein family. Heterodimer of an alpha and a beta chain.

In terms of biological role, this protein is one of the two subunits of integration host factor, a specific DNA-binding protein that functions in genetic recombination as well as in transcriptional and translational control. This chain is Integration host factor subunit beta, found in Azorhizobium caulinodans (strain ATCC 43989 / DSM 5975 / JCM 20966 / LMG 6465 / NBRC 14845 / NCIMB 13405 / ORS 571).